A 355-amino-acid chain; its full sequence is S-adenosylmethionine:tRNA ribosyltransferase-isomerase (355 aa).

Belongs to the QueA family. As to quaternary structure, monomer.

The protein resides in the cytoplasm. The enzyme catalyses 7-aminomethyl-7-carbaguanosine(34) in tRNA + S-adenosyl-L-methionine = epoxyqueuosine(34) in tRNA + adenine + L-methionine + 2 H(+). It participates in tRNA modification; tRNA-queuosine biosynthesis. Its function is as follows. Transfers and isomerizes the ribose moiety from AdoMet to the 7-aminomethyl group of 7-deazaguanine (preQ1-tRNA) to give epoxyqueuosine (oQ-tRNA). This chain is S-adenosylmethionine:tRNA ribosyltransferase-isomerase, found in Burkholderia orbicola (strain AU 1054).